A 70-amino-acid chain; its full sequence is Protein SlyX homolog (70 aa).

This sequence belongs to the SlyX family.

The chain is Protein SlyX homolog from Shewanella pealeana (strain ATCC 700345 / ANG-SQ1).